Consider the following 215-residue polypeptide: Endoplasmic reticulum vesicle protein 25 (215 aa).

The N-terminal stretch at 1–21 is a signal peptide; the sequence is MQSLITYIALVFSLFVSSAIG. Residues 22–184 lie on the Lumenal side of the membrane; sequence LHLEVPALPN…TNESTNSRVK (163 aa). A GOLD domain is found at 34–125; that stretch reads PVCIRDFVQE…VRSVELDIES (92 aa). A helical membrane pass occupies residues 185-205; sequence WFSIVVIASLVGFGVWQIQYL. The Cytoplasmic segment spans residues 206-215; the sequence is RHYFKVKHII.

It belongs to the EMP24/GP25L family.

It localises to the endoplasmic reticulum membrane. The protein resides in the golgi apparatus membrane. In terms of biological role, constituent of COPII-coated endoplasmic reticulum-derived transport vesicles. Required for efficient transport of a subset of secretory proteins to the Golgi. Facilitates retrograde transport from the Golgi to the endoplasmic reticulum. In Candida albicans (strain SC5314 / ATCC MYA-2876) (Yeast), this protein is Endoplasmic reticulum vesicle protein 25 (ERV25).